Here is a 93-residue protein sequence, read N- to C-terminus: MTNTTNAAAATGLTSTTNTPQVSAFVNNWDNLGMWWFSIALMFVCLIIMWLICCLKRKRARPPIYSPIIVLHPNNDGIHRLDGLKHMFFSLTV.

Asn3 is a glycosylation site (N-linked (GlcNAc...) asparagine; by host). The chain crosses the membrane as a helical span at residues 34-55 (MWWFSIALMFVCLIIMWLICCL).

This sequence belongs to the adenoviridae E3A-1 family. In terms of processing, N-glycosylated and probably also O-glycosylated.

The protein localises to the host nucleus membrane. The polypeptide is Early E3A 10.5 kDa glycoprotein (Homo sapiens (Human)).